The sequence spans 298 residues: Isochorismatase domain-containing protein 1 (298 aa).

A Phosphotyrosine modification is found at Y160. An N6-succinyllysine modification is found at K279.

Belongs to the isochorismatase family.

The protein is Isochorismatase domain-containing protein 1 (ISOC1) of Homo sapiens (Human).